A 412-amino-acid polypeptide reads, in one-letter code: Divalent metal cation transporter MntH (412 aa).

Transmembrane regions (helical) follow at residues 19 to 39 (LALM…GNFA), 46 to 66 (ASFG…AMLI), 94 to 114 (VWFY…AEFI), 122 to 142 (LILG…TFLI), 156 to 176 (VIGG…IFSQ), 196 to 216 (AVFL…IYLH), 241 to 261 (IAMT…AAAF), 290 to 310 (VFGL…TLAG), 329 to 349 (TITM…TRIL), 350 to 370 (VMSQ…LLIF), and 389 to 409 (IGWM…VGTA).

The protein belongs to the NRAMP family.

The protein localises to the cell inner membrane. In terms of biological role, h(+)-stimulated, divalent metal cation uptake system. In Citrobacter koseri (strain ATCC BAA-895 / CDC 4225-83 / SGSC4696), this protein is Divalent metal cation transporter MntH.